The following is a 739-amino-acid chain: NAD(P)H-quinone oxidoreductase subunit 5, chloroplastic (739 aa).

The next 16 membrane-spanning stretches (helical) occupy residues W9–F29, W40–I60, I89–I109, F125–I145, I147–T167, G185–F205, N219–A239, T258–A278, V286–A306, L327–I347, A354–S374, I396–S416, W425–Y445, L543–F563, V602–I622, and S717–F737.

It belongs to the complex I subunit 5 family. As to quaternary structure, NDH is composed of at least 16 different subunits, 5 of which are encoded in the nucleus.

The protein localises to the plastid. Its subcellular location is the chloroplast thylakoid membrane. The enzyme catalyses a plastoquinone + NADH + (n+1) H(+)(in) = a plastoquinol + NAD(+) + n H(+)(out). The catalysed reaction is a plastoquinone + NADPH + (n+1) H(+)(in) = a plastoquinol + NADP(+) + n H(+)(out). Functionally, NDH shuttles electrons from NAD(P)H:plastoquinone, via FMN and iron-sulfur (Fe-S) centers, to quinones in the photosynthetic chain and possibly in a chloroplast respiratory chain. The immediate electron acceptor for the enzyme in this species is believed to be plastoquinone. Couples the redox reaction to proton translocation, and thus conserves the redox energy in a proton gradient. In Solanum tuberosum (Potato), this protein is NAD(P)H-quinone oxidoreductase subunit 5, chloroplastic (ndhF).